The sequence spans 401 residues: Argininosuccinate synthase (401 aa).

8–16 (AYSGGLDTS) is an ATP binding site. Tyr-87 is a binding site for L-citrulline. Residue Gly-117 participates in ATP binding. Thr-119, Asn-123, and Asp-124 together coordinate L-aspartate. Residue Asn-123 participates in L-citrulline binding. Residues Arg-127, Ser-175, Glu-259, and Tyr-271 each coordinate L-citrulline.

The protein belongs to the argininosuccinate synthase family. Type 1 subfamily. Homotetramer.

It is found in the cytoplasm. The catalysed reaction is L-citrulline + L-aspartate + ATP = 2-(N(omega)-L-arginino)succinate + AMP + diphosphate + H(+). Its pathway is amino-acid biosynthesis; L-arginine biosynthesis; L-arginine from L-ornithine and carbamoyl phosphate: step 2/3. This is Argininosuccinate synthase from Corynebacterium efficiens (strain DSM 44549 / YS-314 / AJ 12310 / JCM 11189 / NBRC 100395).